A 333-amino-acid polypeptide reads, in one-letter code: Ketol-acid reductoisomerase (NADP(+)) (333 aa).

The region spanning 1–179 (MFYDDDADLS…GGTRAGVIKT (179 aa)) is the KARI N-terminal Rossmann domain. NADP(+) contacts are provided by residues 22–25 (YGSQ), Lys-45, Ser-48, Ser-50, and 80–83 (DTAQ). The active site involves His-105. Gly-131 is an NADP(+) binding site. A KARI C-terminal knotted domain is found at 180 to 325 (TFKDETETDL…KKLRDLMSWV (146 aa)). The Mg(2+) site is built by Asp-188, Glu-192, Glu-224, and Glu-228. Residue Ser-249 participates in substrate binding.

This sequence belongs to the ketol-acid reductoisomerase family. It depends on Mg(2+) as a cofactor.

It carries out the reaction (2R)-2,3-dihydroxy-3-methylbutanoate + NADP(+) = (2S)-2-acetolactate + NADPH + H(+). The enzyme catalyses (2R,3R)-2,3-dihydroxy-3-methylpentanoate + NADP(+) = (S)-2-ethyl-2-hydroxy-3-oxobutanoate + NADPH + H(+). The protein operates within amino-acid biosynthesis; L-isoleucine biosynthesis; L-isoleucine from 2-oxobutanoate: step 2/4. It functions in the pathway amino-acid biosynthesis; L-valine biosynthesis; L-valine from pyruvate: step 2/4. In terms of biological role, involved in the biosynthesis of branched-chain amino acids (BCAA). Catalyzes an alkyl-migration followed by a ketol-acid reduction of (S)-2-acetolactate (S2AL) to yield (R)-2,3-dihydroxy-isovalerate. In the isomerase reaction, S2AL is rearranged via a Mg-dependent methyl migration to produce 3-hydroxy-3-methyl-2-ketobutyrate (HMKB). In the reductase reaction, this 2-ketoacid undergoes a metal-dependent reduction by NADPH to yield (R)-2,3-dihydroxy-isovalerate. This is Ketol-acid reductoisomerase (NADP(+)) from Mycobacterium ulcerans (strain Agy99).